A 784-amino-acid polypeptide reads, in one-letter code: Transcription factor kayak (784 aa).

Low complexity-rich tracts occupy residues 97 to 106 (QPTQSAYQQQ), 115 to 126 (NNNNNSNNNANM), and 198 to 227 (QQQQQSQQQQQSQQQQQSQQQQQSQQQQQQ). Disordered stretches follow at residues 97–126 (QPTQSAYQQQNAKQSYGHNNNNNSNNNANM), 196–231 (YNQQQQQSQQQQQSQQQQQSQQQQQSQQQQQQHLPT), 358–404 (PGSD…GNGS), and 421–464 (SGRG…KRRI). A compositionally biased stretch (polar residues) spans 365-378 (SNGSWNEGQLNDDQ). A compositionally biased stretch (low complexity) spans 380–397 (TTDTSSAATDSTSYQNGG). The segment covering 421–438 (SGRGSGLAANSTTSNSAT) has biased composition (polar residues). The bZIP domain occupies 459 to 522 (EEKRRIRRER…SQLEYVLQTH (64 aa)). The basic motif stretch occupies residues 461 to 463 (KRR). The segment at 464–471 (IRRERNKL) is leucine-zipper. Serine 594 is modified (phosphoserine). 2 disordered regions span residues 616 to 635 (QDGAIDSGSSLDQDGPTPAK) and 759 to 784 (PTCSSQNKHPLELPTPTSEPSKLVSL).

It belongs to the bZIP family. Fos subfamily. In terms of assembly, homodimer. Heterodimer with Jra. The kay-Jra heterodimer binds more stably to the AP-1 site than either of the two proteins alone.

The protein localises to the nucleus. In terms of biological role, developmentally regulated transcription factor AP-1 binds and recognizes the enhancer DNA sequence: 5'-TGA[CG]TCA-3'. May play a role in the function or determination of a particular subset of cells in the developing embryo. It is able to carry out its function either independently of or in conjunction with Jra. The chain is Transcription factor kayak from Drosophila mojavensis (Fruit fly).